A 315-amino-acid chain; its full sequence is Transaldolase (315 aa).

Lys-131 serves as the catalytic Schiff-base intermediate with substrate.

It belongs to the transaldolase family. Type 1 subfamily. In terms of assembly, homodimer.

Its subcellular location is the cytoplasm. It carries out the reaction D-sedoheptulose 7-phosphate + D-glyceraldehyde 3-phosphate = D-erythrose 4-phosphate + beta-D-fructose 6-phosphate. The protein operates within carbohydrate degradation; pentose phosphate pathway; D-glyceraldehyde 3-phosphate and beta-D-fructose 6-phosphate from D-ribose 5-phosphate and D-xylulose 5-phosphate (non-oxidative stage): step 2/3. Functionally, transaldolase is important for the balance of metabolites in the pentose-phosphate pathway. This chain is Transaldolase, found in Actinobacillus pleuropneumoniae serotype 3 (strain JL03).